The primary structure comprises 154 residues: Ribonuclease H (154 aa).

The RNase H type-1 domain occupies 1-142 (MLKHIDLYTD…CDELARDAAS (142 aa)). Residues Asp-10, Glu-48, Asp-70, and Asp-134 each coordinate Mg(2+). The span at 126–147 (GHPENERCDELARDAASGKELA) shows a compositional bias: basic and acidic residues. The interval 126–154 (GHPENERCDELARDAASGKELAEDTGYQP) is disordered.

The protein belongs to the RNase H family. In terms of assembly, monomer. Mg(2+) is required as a cofactor.

Its subcellular location is the cytoplasm. The catalysed reaction is Endonucleolytic cleavage to 5'-phosphomonoester.. Functionally, endonuclease that specifically degrades the RNA of RNA-DNA hybrids. The protein is Ribonuclease H of Aeromonas salmonicida (strain A449).